The chain runs to 677 residues: Pentatricopeptide repeat-containing protein At5g39350 (677 aa).

16 PPR repeats span residues 48-78 (SGHILSTLSVTYALCGHITYARKLFEEMPQS), 79-113 (SLLSYNIVIRMYVREGLYHDAISVFIRMVSEGVKC), 116-146 (DGYTYPFVAKAAGELKSMKLGLVVHGRILRS), 151-181 (DKYVQNALLAMYMNFGKVEMARDVFDVMKNR), 182-216 (DVISWNTMISGYYRNGYMNDALMMFDWMVNESVDL), 217-251 (DHATIVSMLPVCGHLKDLEMGRNVHKLVEEKRLGD), 252-282 (KIEVKNALVNMYLKCGRMDEARFVFDRMERR), 283-317 (DVITWTCMINGYTEDGDVENALELCRLMQFEGVRP), 318-352 (NAVTIASLVSVCGDALKVNDGKCLHGWAVRQQVYS), 353-383 (DIIIETSLISMYAKCKRVDLCFRVFSGASKY), 384-418 (HTGPWSAIIAGCVQNELVSDALGLFKRMRREDVEP), 419-453 (NIATLNSLLPAYAALADLRQAMNIHCYLTKTGFMS), 454-488 (SLDAATGLVHVYSKCGTLESAHKIFNGIQEKHKSK), 489-523 (DVVLWGALISGYGMHGDGHNALQVFMEMVRSGVTP), 524-554 (NEITFTSALNACSHSGLVEEGLTLFRFMLEH), and 560-590 (RSNHYTCIVDLLGRAGRLDEAYNLITTIPFE). Positions 595-670 (VWGALLAACV…KPGHSTIEIR (76 aa)) are type E motif.

Belongs to the PPR family. PCMP-E subfamily.

The sequence is that of Pentatricopeptide repeat-containing protein At5g39350 (PCMP-E16) from Arabidopsis thaliana (Mouse-ear cress).